The sequence spans 270 residues: Acetyl-coenzyme A carboxylase carboxyl transferase subunit beta (270 aa).

In terms of domain architecture, CoA carboxyltransferase N-terminal spans 16–270 (LFAKCPACKH…KLLAFHGGSK (255 aa)). Zn(2+) contacts are provided by Cys20, Cys23, Cys38, and Cys41. The C4-type zinc finger occupies 20–41 (CPACKHMIYQKDLGLEKICPKC).

It belongs to the AccD/PCCB family. In terms of assembly, acetyl-CoA carboxylase is a heterohexamer composed of biotin carboxyl carrier protein (AccB), biotin carboxylase (AccC) and two subunits each of ACCase subunit alpha (AccA) and ACCase subunit beta (AccD). Zn(2+) serves as cofactor.

The protein localises to the cytoplasm. It catalyses the reaction N(6)-carboxybiotinyl-L-lysyl-[protein] + acetyl-CoA = N(6)-biotinyl-L-lysyl-[protein] + malonyl-CoA. Its pathway is lipid metabolism; malonyl-CoA biosynthesis; malonyl-CoA from acetyl-CoA: step 1/1. In terms of biological role, component of the acetyl coenzyme A carboxylase (ACC) complex. Biotin carboxylase (BC) catalyzes the carboxylation of biotin on its carrier protein (BCCP) and then the CO(2) group is transferred by the transcarboxylase to acetyl-CoA to form malonyl-CoA. The polypeptide is Acetyl-coenzyme A carboxylase carboxyl transferase subunit beta (Streptococcus mutans serotype c (strain NN2025)).